The sequence spans 854 residues: MNRKTVFRNVLLVAVVLLVIYAFSYFSNDTRDFKTVDTSVAISQLDAKNVASAQIDDREQQVRLWLKNGNDATDGKTQILAKYPASASEQIFDKVEGAGADKFNTTVTQESWLTSILLFVLPMIILFGIFFFVMNRMQGGGGRGGVMGFGKSKAKQLTKDMPKTTFADVAGADEAVEELYEIKDFLQNPARYQALGAKIPRGVLLYGPPGTGKTLLARAVAGEAGVPFFTISGSDFVEMFVGVGASRVRDMFEQAKQNSPCIIFVDEIDAVGRQRGAGLGGGHDEREQTLNQLLVEMDGFGDRTGIILIAATNRPDILDPALLRPGRFDRQIPVGAPDLAGRRAILRVHSQGKPIDPNADLEGLAKRTVGMSGADLANVINEAALLTARENGTVITEASLEESVDRVVGGPRRKSRIISEHEKKITAYHEGGHTLAAWAMPDIEPVYKVTILARGRTGGHAMTVPEDDKGLMTRSEMIARLVMAMGGRAAEELVFHEPTTGASSDIDMATKIARAMVTEYGMSAKLGAVRYGQEGGDPFLGRSMGVQSDYSHEIAREIDEEVRNLIEAAHTEAWAILNEYRDALDLIATELLERETLTRKDLEKILAGVEKRPRITAFNDFGGRTPSDRPPVKTPRELAIERGETWPEPAAAPVLVKAGAPNSGVPNGGVPNNGGLPNNGNQGPSNGYAQPSYPQPSAPQQTPQPGTPDYGAPAGWSAPGWPPRENPSPTYPGQQSGGYTGGQNPTPPNQSQGQYGQPQHGQPQPDQGQYGQPHPGQQAYPEQPHPGRRYPAQPDYPVQYPDGGPFADPNRGNPSGENQWQSPTPEQPQTPPPHHSAEDDGPSTARWDGPDGSR.

Residues 1-5 are Cytoplasmic-facing; sequence MNRKT. Residues 6-26 traverse the membrane as a helical segment; the sequence is VFRNVLLVAVVLLVIYAFSYF. Topologically, residues 27 to 112 are extracellular; the sequence is SNDTRDFKTV…FNTTVTQESW (86 aa). A helical transmembrane segment spans residues 113–133; the sequence is LTSILLFVLPMIILFGIFFFV. Over 134–854 the chain is Cytoplasmic; sequence MNRMQGGGGR…ARWDGPDGSR (721 aa). An ATP-binding site is contributed by 207–214; it reads GPPGTGKT. Zn(2+) is bound at residue His429. Glu430 is a catalytic residue. Residues His433 and Asp505 each contribute to the Zn(2+) site. The tract at residues 658–854 is disordered; the sequence is AGAPNSGVPN…ARWDGPDGSR (197 aa). Low complexity-rich tracts occupy residues 661–692 and 698–719; these read PNSG…AQPS and APQQ…WSAP. A compositionally biased stretch (pro residues) spans 720–730; the sequence is GWPPRENPSPT. A compositionally biased stretch (low complexity) spans 749–778; the sequence is NQSQGQYGQPQHGQPQPDQGQYGQPHPGQQ. Polar residues predominate over residues 812 to 822; the sequence is GNPSGENQWQS. Over residues 825-834 the composition is skewed to pro residues; that stretch reads PEQPQTPPPH.

The protein in the central section; belongs to the AAA ATPase family. In the C-terminal section; belongs to the peptidase M41 family. Homohexamer. Zn(2+) serves as cofactor.

Its subcellular location is the cell membrane. Its function is as follows. Acts as a processive, ATP-dependent zinc metallopeptidase for both cytoplasmic and membrane proteins. Plays a role in the quality control of integral membrane proteins. The sequence is that of ATP-dependent zinc metalloprotease FtsH from Rhodococcus erythropolis (strain PR4 / NBRC 100887).